The sequence spans 803 residues: Integrin beta-1 (803 aa).

A signal peptide spans 1-24; sequence MAETNLTLLTWAGILCCLIWSGSA. A Blocked amino end (Gln) modification is found at glutamine 25. At 25-733 the chain is on the extracellular side; it reads QQGGSDCIKA…ETPECPSGPD (709 aa). The 51-residue stretch at 30 to 80 folds into the PSI domain; the sequence is DCIKANAKSCGECIQAGPNCGWCKKTDFLQEGEPTSARCDDLAALKSKGCP. 22 disulfides stabilise this stretch: cysteine 31/cysteine 49, cysteine 39/cysteine 469, cysteine 42/cysteine 68, cysteine 52/cysteine 79, cysteine 211/cysteine 217, cysteine 265/cysteine 305, cysteine 405/cysteine 419, cysteine 439/cysteine 467, cysteine 471/cysteine 491, cysteine 482/cysteine 494, cysteine 496/cysteine 505, cysteine 507/cysteine 538, cysteine 521/cysteine 536, cysteine 530/cysteine 541, cysteine 543/cysteine 558, cysteine 560/cysteine 581, cysteine 565/cysteine 579, cysteine 573/cysteine 584, cysteine 586/cysteine 595, cysteine 597/cysteine 620, cysteine 604/cysteine 618, and cysteine 612/cysteine 623. In terms of domain architecture, VWFA spans 144–382; sequence DYPIDLYYLM…QLIIDAYNSL (239 aa). Mg(2+)-binding residues include serine 156 and serine 158. 4 residues coordinate Ca(2+): serine 158, aspartate 161, aspartate 162, and glutamate 193. Positions 211–217 are CX3CL1-binding; it reads CTGDQNC. Asparagine 216 is a glycosylation site (N-linked (GlcNAc...) asparagine). Residues asparagine 248, aspartate 250, proline 252, and glutamate 253 each coordinate Ca(2+). Glutamate 253 is a binding site for Mg(2+). Asparagine 273 is a glycosylation site (N-linked (GlcNAc...) asparagine). The CX3CL1-binding stretch occupies residues 299–318; it reads LPNDGKCHLENNMYTMSHYY. N-linked (GlcNAc...) asparagine glycosylation is found at asparagine 367, asparagine 410, asparagine 421, asparagine 433, asparagine 445, and asparagine 486. An interaction with TMEM182 region spans residues 387–470; that stretch reads ILENSKLPKE…IHLQFICDCL (84 aa). 4 I-EGF domains span residues 471-506, 507-559, 560-596, and 597-636; these read CQSEGEPNSPACHDGNGTFECGACRCNEGRIGRLCE, CSTD…KYCE, CDNFNCDRSNGLICGGNGICKCRVCECFPNFTGSACD, and CSLDTTPCMAGNGQICNGRGTCECGTCNCTDPKFQGPTCE. Asparagine 525 carries N-linked (GlcNAc...) asparagine glycosylation. Asparagine 589 is a glycosylation site (N-linked (GlcNAc...) asparagine). N-linked (GlcNAc...) asparagine glycosylation occurs at asparagine 624. Disulfide bonds link cysteine 625-cysteine 635, cysteine 638-cysteine 641, cysteine 645-cysteine 696, cysteine 651-cysteine 670, cysteine 654-cysteine 666, and cysteine 704-cysteine 728. N-linked (GlcNAc...) asparagine glycosylation is present at asparagine 674. The helical transmembrane segment at 734–756 threads the bilayer; the sequence is IIPIVAGVVAGIVLIGLALLLIW. Over 757–803 the chain is Cytoplasmic; that stretch reads KLLMIIHDRREFAKFEKEKMNAKWDTGENPIYKSAVTTVVNPKYEGK. Phosphotyrosine; by Tyr-kinases is present on tyrosine 788.

Belongs to the integrin beta chain family. In terms of assembly, heterodimer of an alpha and a beta subunit. Beta-1 associates with either alpha-1, alpha-2, alpha-3, alpha-4, alpha-5, alpha-6, alpha-7, alpha-8, alpha-9, alpha-10, alpha-11 or alpha-V. Interacts with TMEM182 and LAMB1. Expressed on surface of embryonic fibroblasts (at protein level).

The protein localises to the cell membrane. The protein resides in the cell projection. It localises to the invadopodium membrane. It is found in the ruffle membrane. Its subcellular location is the melanosome. The protein localises to the lamellipodium. The protein resides in the ruffle. It localises to the cell junction. It is found in the focal adhesion. Functionally, integrins alpha-1/beta-1, alpha-2/beta-1, alpha-10/beta-1 and alpha-11/beta-1 are receptors for collagen. Integrins alpha-1/beta-1 and alpha-2/beta-1 recognize the proline-hydroxylated sequence G-F-P-G-E-R in collagen. Integrins alpha-2/beta-1, alpha-3/beta-1, alpha-4/beta-1, alpha-5/beta-1, alpha-8/beta-1, alpha-10/beta-1, alpha-11/beta-1 and alpha-V/beta-1 are receptors for fibronectin. Alpha-4/beta-1 recognizes one or more domains within the alternatively spliced CS-1 and CS-5 regions of fibronectin. Integrin alpha-5/beta-1 is a receptor for fibrinogen. Integrin alpha-1/beta-1, alpha-2/beta-1, alpha-6/beta-1 and alpha-7/beta-1 are receptors for lamimin. Integrin alpha-6/beta-1 (ITGA6:ITGB1) is present in oocytes and is involved in sperm-egg fusion. Integrin alpha-4/beta-1 is a receptor for VCAM1 and recognizes the sequence Q-I-D-S in VCAM1. Integrin alpha-9/beta-1 is a receptor for VCAM1, cytotactin and osteopontin. It recognizes the sequence A-E-I-D-G-I-E-L in cytotactin. Integrin alpha-3/beta-1 is a receptor for epiligrin, thrombospondin and CSPG4. Integrin alpha-3/beta-1 provides a docking site for FAP (seprase) at invadopodia plasma membranes in a collagen-dependent manner and hence may participate in the adhesion, formation of invadopodia and matrix degradation processes, promoting cell invasion. Alpha-3/beta-1 may mediate with LGALS3 the stimulation by CSPG4 of endothelial cells migration. Integrin alpha-V/beta-1 is a receptor for vitronectin. Beta-1 integrins recognize the sequence R-G-D in a wide array of ligands. When associated with alpha-7/beta-1 integrin, regulates cell adhesion and laminin matrix deposition. Involved in promoting endothelial cell motility and angiogenesis. Involved in osteoblast compaction through the fibronectin fibrillogenesis cell-mediated matrix assembly process and the formation of mineralized bone nodules. May be involved in up-regulation of the activity of kinases such as PKC via binding to KRT1. Together with KRT1 and RACK1, serves as a platform for SRC activation or inactivation. ITGA4:ITGB1 binds to fractalkine (CX3CL1) and may act as its coreceptor in CX3CR1-dependent fractalkine signaling. ITGA4:ITGB1 and ITGA5:ITGB1 bind to PLA2G2A via a site (site 2) which is distinct from the classical ligand-binding site (site 1) and this induces integrin conformational changes and enhanced ligand binding to site 1. ITGA5:ITGB1 acts as a receptor for fibrillin-1 (FBN1) and mediates R-G-D-dependent cell adhesion to FBN1. ITGA5:ITGB1 acts as a receptor for fibronectin FN1 and mediates R-G-D-dependent cell adhesion to FN1. ITGA5:ITGB1 is a receptor for IL1B and binding is essential for IL1B signaling. ITGA5:ITGB3 is a receptor for soluble CD40LG and is required for CD40/CD40LG signaling. Plays an important role in myoblast differentiation and fusion during skeletal myogenesis. The polypeptide is Integrin beta-1 (ITGB1) (Gallus gallus (Chicken)).